The chain runs to 203 residues: Small ribosomal subunit protein uS4 (203 aa).

The S4 RNA-binding domain occupies 93-154; it reads CRFDNVVFRA…KSRNMDAVRN (62 aa).

This sequence belongs to the universal ribosomal protein uS4 family. In terms of assembly, part of the 30S ribosomal subunit. Contacts protein S5. The interaction surface between S4 and S5 is involved in control of translational fidelity.

One of the primary rRNA binding proteins, it binds directly to 16S rRNA where it nucleates assembly of the body of the 30S subunit. Functionally, with S5 and S12 plays an important role in translational accuracy. This chain is Small ribosomal subunit protein uS4, found in Chloroherpeton thalassium (strain ATCC 35110 / GB-78).